A 73-amino-acid polypeptide reads, in one-letter code: Beta-defensin 10 (73 aa).

Positions 1 to 23 (MRTLCSLLLICCLLFSYTTPAVG) are cleaved as a signal peptide. Cystine bridges form between C37-C66, C44-C59, and C49-C67.

It belongs to the beta-defensin family. Expressed in both adult and neonate brain, and very weakly in kidneys, epididymis, and testis.

It localises to the secreted. Its function is as follows. Has antibacterial activity. The protein is Beta-defensin 10 (Defb10) of Mus musculus (Mouse).